The chain runs to 114 residues: uncharacterized protein (114 aa).

The next 2 membrane-spanning stretches (helical) occupy residues 58–78 and 94–114; these read CLLG…FFLL and SISY…FCLA.

It localises to the membrane. This is an uncharacterized protein from Saccharomyces cerevisiae (strain ATCC 204508 / S288c) (Baker's yeast).